Consider the following 459-residue polypeptide: uncharacterized protein (459 aa).

Lys285 is modified (N6-(pyridoxal phosphate)lysine).

The protein belongs to the class-III pyridoxal-phosphate-dependent aminotransferase family.

It is found in the cytoplasm. This is an uncharacterized protein from Schizosaccharomyces pombe (strain 972 / ATCC 24843) (Fission yeast).